An 89-amino-acid polypeptide reads, in one-letter code: Rho beta-crystallin (89 aa).

His31 contributes to the substrate binding site.

This sequence belongs to the aldo/keto reductase family. Monomer.

In Lepidodactylus lugubris (Mourning gecko), this protein is Rho beta-crystallin.